The following is a 119-amino-acid chain: Large ribosomal subunit protein bL17 (119 aa).

This sequence belongs to the bacterial ribosomal protein bL17 family. As to quaternary structure, part of the 50S ribosomal subunit. Contacts protein L32.

The chain is Large ribosomal subunit protein bL17 from Psychrobacter arcticus (strain DSM 17307 / VKM B-2377 / 273-4).